Consider the following 190-residue polypeptide: Peptidyl-tRNA hydrolase (190 aa).

Y14 lines the tRNA pocket. The active-site Proton acceptor is H19. TRNA is bound by residues Y64, N66, and N112.

It belongs to the PTH family. As to quaternary structure, monomer.

It localises to the cytoplasm. It carries out the reaction an N-acyl-L-alpha-aminoacyl-tRNA + H2O = an N-acyl-L-amino acid + a tRNA + H(+). Functionally, hydrolyzes ribosome-free peptidyl-tRNAs (with 1 or more amino acids incorporated), which drop off the ribosome during protein synthesis, or as a result of ribosome stalling. Catalyzes the release of premature peptidyl moieties from peptidyl-tRNA molecules trapped in stalled 50S ribosomal subunits, and thus maintains levels of free tRNAs and 50S ribosomes. This is Peptidyl-tRNA hydrolase from Chlorobium phaeovibrioides (strain DSM 265 / 1930) (Prosthecochloris vibrioformis (strain DSM 265)).